We begin with the raw amino-acid sequence, 961 residues long: Leucine--tRNA ligase (961 aa).

The 'HIGH' region motif lies at 41–51 (PYLNGNLHAGH). Positions 632-636 (KMSKS) match the 'KMSKS' region motif. ATP is bound at residue Lys635.

Belongs to the class-I aminoacyl-tRNA synthetase family.

It is found in the cytoplasm. It catalyses the reaction tRNA(Leu) + L-leucine + ATP = L-leucyl-tRNA(Leu) + AMP + diphosphate. This chain is Leucine--tRNA ligase, found in Methanosarcina acetivorans (strain ATCC 35395 / DSM 2834 / JCM 12185 / C2A).